The primary structure comprises 75 residues: Rugosin-LK2 (75 aa).

The signal sequence occupies residues 1–24 (MFTMKKSLLFLFFLGTISLSFCEG). Residues 25-40 (ERSADEDDEGEMTEEE) constitute a propeptide that is removed on maturation.

In terms of tissue distribution, expressed by the skin glands.

It is found in the secreted. Functionally, has antimicrobial activity against Gram-positive bacteria S.aureus ATCC 2592 (MIC=10.0 uM), S.aureus ATCC 43300 (MIC=10.0 uM) and B.subtilis (MIC=30.0 uM), against Gram-negative bacteria E.coli ML-35P (MIC=10.0 uM), P.aeruginosa PA01 (MIC=2.5 uM) and P.aeruginosa ATCC 27853 (MIC=2.5 uM) and against fungus C.albicans ATCC 2002 (MIC=10.0 uM). The sequence is that of Rugosin-LK2 from Limnonectes kuhlii (Kuhl's Creek frog).